The primary structure comprises 110 residues: MSDVLAELDKVLAQRKNAGDPESSYVAKLHHKGLNKILEKVGEECTETILAAKDAQHDSDTQHLIYETADLWFHSLVMLSHLGLSAEDVLNELARRFDLSGLEEKARRQS.

The protein belongs to the PRA-PH family.

Its subcellular location is the cytoplasm. The enzyme catalyses 1-(5-phospho-beta-D-ribosyl)-ATP + H2O = 1-(5-phospho-beta-D-ribosyl)-5'-AMP + diphosphate + H(+). Its pathway is amino-acid biosynthesis; L-histidine biosynthesis; L-histidine from 5-phospho-alpha-D-ribose 1-diphosphate: step 2/9. This is Phosphoribosyl-ATP pyrophosphatase from Teredinibacter turnerae (strain ATCC 39867 / T7901).